We begin with the raw amino-acid sequence, 177 residues long: Translation initiation factor IF-3 (177 aa).

Belongs to the IF-3 family. Monomer.

It is found in the cytoplasm. In terms of biological role, IF-3 binds to the 30S ribosomal subunit and shifts the equilibrium between 70S ribosomes and their 50S and 30S subunits in favor of the free subunits, thus enhancing the availability of 30S subunits on which protein synthesis initiation begins. The sequence is that of Translation initiation factor IF-3 from Nostoc punctiforme (strain ATCC 29133 / PCC 73102).